The following is a 201-amino-acid chain: Probable quinol oxidase subunit 3 (201 aa).

5 helical membrane-spanning segments follow: residues 20-40 (LGFW…FATL), 62-82 (LVLI…ISIY), 91-111 (LMMF…GFEI), 133-153 (FFIL…WIIC), and 172-192 (FIVS…FTAV).

This sequence belongs to the cytochrome c oxidase subunit 3 family.

The protein localises to the cell membrane. It carries out the reaction 2 a quinol + O2 = 2 a quinone + 2 H2O. In terms of biological role, catalyzes quinol oxidation with the concomitant reduction of oxygen to water. This is Probable quinol oxidase subunit 3 (qoxC) from Staphylococcus haemolyticus (strain JCSC1435).